The sequence spans 106 residues: Small ribosomal subunit protein uS10 (106 aa).

The protein belongs to the universal ribosomal protein uS10 family. In terms of assembly, part of the 30S ribosomal subunit.

Involved in the binding of tRNA to the ribosomes. This is Small ribosomal subunit protein uS10 from Parasynechococcus marenigrum (strain WH8102).